Reading from the N-terminus, the 179-residue chain is MASHIGKLPVTIPAGVEVKIDGQSFTAKGAKGTDSYEIPEGITAVVEGNEVVLTPADDLRPTRAKHGLARSIVAGMVKGVHEGYAKTLEIVGTGYRAQMKGKGIEFSLGYSHTITVEPPAGIEFELPNPNQVIVKGIDKQAVGQCAANIRKLRAPEPYKGKGIKYADEHILRKAGKAGK.

It belongs to the universal ribosomal protein uL6 family. Part of the 50S ribosomal subunit.

In terms of biological role, this protein binds to the 23S rRNA, and is important in its secondary structure. It is located near the subunit interface in the base of the L7/L12 stalk, and near the tRNA binding site of the peptidyltransferase center. The polypeptide is Large ribosomal subunit protein uL6 (Bifidobacterium adolescentis (strain ATCC 15703 / DSM 20083 / NCTC 11814 / E194a)).